We begin with the raw amino-acid sequence, 135 residues long: Universal stress protein Aq_178 (135 aa).

This sequence belongs to the universal stress protein A family.

The polypeptide is Universal stress protein Aq_178 (Aquifex aeolicus (strain VF5)).